A 619-amino-acid chain; its full sequence is Dihydroxy-acid dehydratase (619 aa).

Aspartate 80 lines the Mg(2+) pocket. Cysteine 121 provides a ligand contact to [2Fe-2S] cluster. Positions 122 and 123 each coordinate Mg(2+). Lysine 123 is subject to N6-carboxylysine. Residue cysteine 196 coordinates [2Fe-2S] cluster. Residue glutamate 492 participates in Mg(2+) binding. Catalysis depends on serine 518, which acts as the Proton acceptor.

This sequence belongs to the IlvD/Edd family. As to quaternary structure, homodimer. It depends on [2Fe-2S] cluster as a cofactor. Mg(2+) serves as cofactor.

It catalyses the reaction (2R)-2,3-dihydroxy-3-methylbutanoate = 3-methyl-2-oxobutanoate + H2O. The catalysed reaction is (2R,3R)-2,3-dihydroxy-3-methylpentanoate = (S)-3-methyl-2-oxopentanoate + H2O. It functions in the pathway amino-acid biosynthesis; L-isoleucine biosynthesis; L-isoleucine from 2-oxobutanoate: step 3/4. Its pathway is amino-acid biosynthesis; L-valine biosynthesis; L-valine from pyruvate: step 3/4. Functionally, functions in the biosynthesis of branched-chain amino acids. Catalyzes the dehydration of (2R,3R)-2,3-dihydroxy-3-methylpentanoate (2,3-dihydroxy-3-methylvalerate) into 2-oxo-3-methylpentanoate (2-oxo-3-methylvalerate) and of (2R)-2,3-dihydroxy-3-methylbutanoate (2,3-dihydroxyisovalerate) into 2-oxo-3-methylbutanoate (2-oxoisovalerate), the penultimate precursor to L-isoleucine and L-valine, respectively. The sequence is that of Dihydroxy-acid dehydratase from Bifidobacterium adolescentis (strain ATCC 15703 / DSM 20083 / NCTC 11814 / E194a).